A 177-amino-acid polypeptide reads, in one-letter code: Large ribosomal subunit protein uL6 (177 aa).

It belongs to the universal ribosomal protein uL6 family. Part of the 50S ribosomal subunit.

In terms of biological role, this protein binds to the 23S rRNA, and is important in its secondary structure. It is located near the subunit interface in the base of the L7/L12 stalk, and near the tRNA binding site of the peptidyltransferase center. The sequence is that of Large ribosomal subunit protein uL6 from Vibrio vulnificus (strain CMCP6).